Here is a 477-residue protein sequence, read N- to C-terminus: Aspartyl/glutamyl-tRNA(Asn/Gln) amidotransferase subunit B (477 aa).

This sequence belongs to the GatB/GatE family. GatB subfamily. As to quaternary structure, heterotrimer of A, B and C subunits.

It catalyses the reaction L-glutamyl-tRNA(Gln) + L-glutamine + ATP + H2O = L-glutaminyl-tRNA(Gln) + L-glutamate + ADP + phosphate + H(+). The enzyme catalyses L-aspartyl-tRNA(Asn) + L-glutamine + ATP + H2O = L-asparaginyl-tRNA(Asn) + L-glutamate + ADP + phosphate + 2 H(+). Allows the formation of correctly charged Asn-tRNA(Asn) or Gln-tRNA(Gln) through the transamidation of misacylated Asp-tRNA(Asn) or Glu-tRNA(Gln) in organisms which lack either or both of asparaginyl-tRNA or glutaminyl-tRNA synthetases. The reaction takes place in the presence of glutamine and ATP through an activated phospho-Asp-tRNA(Asn) or phospho-Glu-tRNA(Gln). This Nitrosococcus oceani (strain ATCC 19707 / BCRC 17464 / JCM 30415 / NCIMB 11848 / C-107) protein is Aspartyl/glutamyl-tRNA(Asn/Gln) amidotransferase subunit B.